The chain runs to 171 residues: Transcription antitermination protein NusB (171 aa).

This sequence belongs to the NusB family.

In terms of biological role, involved in transcription antitermination. Required for transcription of ribosomal RNA (rRNA) genes. Binds specifically to the boxA antiterminator sequence of the ribosomal RNA (rrn) operons. This is Transcription antitermination protein NusB from Pelodictyon phaeoclathratiforme (strain DSM 5477 / BU-1).